Here is a 104-residue protein sequence, read N- to C-terminus: Large ribosomal subunit protein uL24 (104 aa).

It belongs to the universal ribosomal protein uL24 family. Part of the 50S ribosomal subunit.

One of two assembly initiator proteins, it binds directly to the 5'-end of the 23S rRNA, where it nucleates assembly of the 50S subunit. In terms of biological role, one of the proteins that surrounds the polypeptide exit tunnel on the outside of the subunit. The sequence is that of Large ribosomal subunit protein uL24 from Idiomarina loihiensis (strain ATCC BAA-735 / DSM 15497 / L2-TR).